A 750-amino-acid polypeptide reads, in one-letter code: Neprilysin (750 aa).

Polar residues predominate over residues 1–14 (MGKSESQMDITDIN). Residues 1–20 (MGKSESQMDITDINTPKPKK) form a disordered region. The N-myristoyl glycine moiety is linked to residue glycine 2. At 2–28 (GKSESQMDITDINTPKPKKKQRWTPLE) the chain is on the cytoplasmic side. 2 positions are modified to phosphoserine: serine 4 and serine 6. Residues 16-23 (PKPKKKQR) carry the Stop-transfer sequence motif. Residues 29–51 (ISLSVLVLLLTIIAVTMIALYAT) form a helical; Signal-anchor for type II membrane protein membrane-spanning segment. At 52-750 (YDDGICKSSD…MNPEKKCRVW (699 aa)) the chain is on the extracellular side. Residues 56-750 (ICKSSDCIKS…MNPEKKCRVW (695 aa)) enclose the Peptidase M13 domain. Intrachain disulfides connect cysteine 57–cysteine 62, cysteine 80–cysteine 735, cysteine 88–cysteine 695, cysteine 143–cysteine 411, cysteine 234–cysteine 242, and cysteine 621–cysteine 747. Arginine 103 is a binding site for a peptide. N-linked (GlcNAc...) asparagine glycosylation is present at asparagine 145. Residues asparagine 285 and asparagine 325 are each glycosylated (N-linked (GlcNAc...) asparagine). Histidine 584 contacts Zn(2+). Glutamate 585 is a catalytic residue. Zn(2+) is bound at residue histidine 588. Asparagine 628 carries N-linked (GlcNAc...) asparagine glycosylation. Glutamate 647 contacts Zn(2+). Residue aspartate 651 is the Proton donor of the active site.

The protein belongs to the peptidase M13 family. It depends on Zn(2+) as a cofactor. Myristoylation is a determinant of membrane targeting. Post-translationally, glycosylation at Asn-628 is necessary both for surface expression and neutral endopeptidase activity.

Its subcellular location is the cell membrane. It carries out the reaction Preferential cleavage of polypeptides between hydrophobic residues, particularly with Phe or Tyr at P1'.. It catalyses the reaction substance P + H2O = substance P(1-9) + L-Leu-L-Met-NH2. The catalysed reaction is substance P + H2O = substance P(1-7) + L-Phe-Gly-L-Leu-L-Met-NH2. The enzyme catalyses neurotensin + H2O = neurotensin(1-11) + L-isoleucyl-L-leucine. It carries out the reaction neurotensin + H2O = neurotensin(1-10) + L-tyrosyl-L-isoleucyl-L-leucine. Inhibited in a dose dependent manner by opiorphin. Activated by K49-P1-20, a twenty-residue synthetic peptide shortened from the snake B.asper myotoxin II. Functionally, thermolysin-like specificity, but is almost confined on acting on polypeptides of up to 30 amino acids. Biologically important in the destruction of opioid peptides such as Met- and Leu-enkephalins by cleavage of a Gly-Phe bond. Catalyzes cleavage of bradykinin, substance P and neurotensin peptides. Able to cleave angiotensin-1, angiotensin-2 and angiotensin 1-9. Involved in the degradation of atrial natriuretic factor (ANF) and brain natriuretic factor (BNP(1-32)). Displays UV-inducible elastase activity toward skin preelastic and elastic fibers. The chain is Neprilysin from Homo sapiens (Human).